The sequence spans 282 residues: Energy-coupling factor transporter ATP-binding protein EcfA1 (282 aa).

In terms of domain architecture, ABC transporter spans I6 to D243. G40–S47 serves as a coordination point for ATP.

It belongs to the ABC transporter superfamily. Energy-coupling factor EcfA family. As to quaternary structure, forms a stable energy-coupling factor (ECF) transporter complex composed of 2 membrane-embedded substrate-binding proteins (S component), 2 ATP-binding proteins (A component) and 2 transmembrane proteins (T component).

Its subcellular location is the cell membrane. In terms of biological role, ATP-binding (A) component of a common energy-coupling factor (ECF) ABC-transporter complex. Unlike classic ABC transporters this ECF transporter provides the energy necessary to transport a number of different substrates. The polypeptide is Energy-coupling factor transporter ATP-binding protein EcfA1 (Lactobacillus delbrueckii subsp. bulgaricus (strain ATCC BAA-365 / Lb-18)).